Consider the following 248-residue polypeptide: Glutaredoxin domain-containing cysteine-rich protein 2 (248 aa).

2 stretches are compositionally biased toward basic and acidic residues: residues 1–16 (MEDPEKKLNQKSDGKP) and 157–172 (LMNKEESYGGRDQHDR). Disordered regions lie at residues 1-20 (MEDPEKKLNQKSDGKPRKVR) and 150-172 (EEAEEESLMNKEESYGGRDQHDR).

This sequence belongs to the GRXCR2 family. Interacts with TPRN; the interaction restricts TPRN to the stereocilum basal region.

It localises to the cell projection. It is found in the stereocilium. Required for hearing. Plays a role in maintaining cochlear stereocilia bundles that are involved in sound detection. Ensures the restriction of TPRN to the basal region of stereocilia in hair cells. This Homo sapiens (Human) protein is Glutaredoxin domain-containing cysteine-rich protein 2 (GRXCR2).